A 479-amino-acid chain; its full sequence is Glutamyl-tRNA(Gln) amidotransferase subunit A (479 aa).

Catalysis depends on charge relay system residues K71 and S146. S170 acts as the Acyl-ester intermediate in catalysis.

The protein belongs to the amidase family. GatA subfamily. As to quaternary structure, heterotrimer of A, B and C subunits.

It carries out the reaction L-glutamyl-tRNA(Gln) + L-glutamine + ATP + H2O = L-glutaminyl-tRNA(Gln) + L-glutamate + ADP + phosphate + H(+). In terms of biological role, allows the formation of correctly charged Gln-tRNA(Gln) through the transamidation of misacylated Glu-tRNA(Gln) in organisms which lack glutaminyl-tRNA synthetase. The reaction takes place in the presence of glutamine and ATP through an activated gamma-phospho-Glu-tRNA(Gln). The sequence is that of Glutamyl-tRNA(Gln) amidotransferase subunit A from Lactobacillus johnsonii (strain CNCM I-12250 / La1 / NCC 533).